The chain runs to 307 residues: Metapyrocatechase (307 aa).

VOC domains follow at residues 7–122 (RPGH…LYAD) and 150–269 (RFDH…VFCG). The Fe cation site is built by His-153, His-214, and Glu-265.

Belongs to the extradiol ring-cleavage dioxygenase family. As to quaternary structure, homotetramer. Fe(2+) serves as cofactor.

It catalyses the reaction catechol + O2 = (2Z,4E)-2-hydroxy-6-oxohexa-2,4-dienoate + H(+). It participates in xenobiotic degradation; toluene degradation. This Pseudomonas putida (Arthrobacter siderocapsulatus) protein is Metapyrocatechase (xylE).